The primary structure comprises 396 residues: S-adenosylmethionine synthase (396 aa).

E12 serves as a coordination point for Mg(2+). H18 is a binding site for ATP. A K(+)-binding site is contributed by E46. Residues E59 and Q102 each coordinate L-methionine. ATP contacts are provided by residues 170–172 (DGK), 238–241 (SGRF), D249, 255–256 (RK), A272, K276, and K280. D249 contributes to the L-methionine binding site. An L-methionine-binding site is contributed by K280.

This sequence belongs to the AdoMet synthase family. As to quaternary structure, homotetramer. Requires Mn(2+) as cofactor. It depends on Mg(2+) as a cofactor. Co(2+) is required as a cofactor. The cofactor is K(+).

The protein resides in the cytoplasm. The enzyme catalyses L-methionine + ATP + H2O = S-adenosyl-L-methionine + phosphate + diphosphate. It participates in amino-acid biosynthesis; S-adenosyl-L-methionine biosynthesis; S-adenosyl-L-methionine from L-methionine: step 1/1. Its function is as follows. Catalyzes the formation of S-adenosylmethionine from methionine and ATP. The reaction comprises two steps that are both catalyzed by the same enzyme: formation of S-adenosylmethionine (AdoMet) and triphosphate, and subsequent hydrolysis of the triphosphate. The sequence is that of S-adenosylmethionine synthase (SAMS) from Triticum aestivum (Wheat).